Here is a 277-residue protein sequence, read N- to C-terminus: Large ribosomal subunit protein uL2 (277 aa).

The tract at residues Leu-215–Arg-263 is disordered.

This sequence belongs to the universal ribosomal protein uL2 family. In terms of assembly, part of the 50S ribosomal subunit. Forms a bridge to the 30S subunit in the 70S ribosome.

One of the primary rRNA binding proteins. Required for association of the 30S and 50S subunits to form the 70S ribosome, for tRNA binding and peptide bond formation. It has been suggested to have peptidyltransferase activity; this is somewhat controversial. Makes several contacts with the 16S rRNA in the 70S ribosome. The polypeptide is Large ribosomal subunit protein uL2 (Deinococcus geothermalis (strain DSM 11300 / CIP 105573 / AG-3a)).